Consider the following 163-residue polypeptide: Phosphopantetheine adenylyltransferase (163 aa).

Serine 9 lines the substrate pocket. ATP-binding positions include 9–10 (SF) and histidine 17. Lysine 41, leucine 73, and lysine 87 together coordinate substrate. Residues 88–90 (GLR), glutamate 98, and 124–130 (YTYVSST) contribute to the ATP site.

Belongs to the bacterial CoaD family. Homohexamer. Mg(2+) is required as a cofactor.

The protein localises to the cytoplasm. The catalysed reaction is (R)-4'-phosphopantetheine + ATP + H(+) = 3'-dephospho-CoA + diphosphate. It functions in the pathway cofactor biosynthesis; coenzyme A biosynthesis; CoA from (R)-pantothenate: step 4/5. Its function is as follows. Reversibly transfers an adenylyl group from ATP to 4'-phosphopantetheine, yielding dephospho-CoA (dPCoA) and pyrophosphate. In Fusobacterium nucleatum subsp. nucleatum (strain ATCC 25586 / DSM 15643 / BCRC 10681 / CIP 101130 / JCM 8532 / KCTC 2640 / LMG 13131 / VPI 4355), this protein is Phosphopantetheine adenylyltransferase.